Here is a 293-residue protein sequence, read N- to C-terminus: ADP-forming sulfoacetate-CoA ligase subunit SauD (293 aa).

CoA is bound by residues 17-20, Lys43, and 96-98; these read TGKE and IAD. The Tele-phosphohistidine intermediate role is filled by His251.

The protein belongs to the succinate/malate CoA ligase alpha subunit family. In terms of assembly, forms a complex with SauC.

It catalyses the reaction sulfoacetate + ATP + CoA = sulfoacetyl-CoA + ADP + phosphate. In terms of biological role, involved in the degradation of sulfoacetate. Catalyzes the CoA- and ATP-dependent conversion of sulfoacetate to sulfoacetyl-CoA and ADP. Cannot use other sulfonic and carboxylic acids, and shows only residual activity with 3-sulfopropanoate and malonic acid. In Bilophila wadsworthia (strain 3_1_6), this protein is ADP-forming sulfoacetate-CoA ligase subunit SauD.